A 156-amino-acid chain; its full sequence is Small ribosomal subunit protein uS7 (156 aa).

It belongs to the universal ribosomal protein uS7 family. As to quaternary structure, part of the 30S ribosomal subunit. Contacts proteins S9 and S11.

Its function is as follows. One of the primary rRNA binding proteins, it binds directly to 16S rRNA where it nucleates assembly of the head domain of the 30S subunit. Is located at the subunit interface close to the decoding center, probably blocks exit of the E-site tRNA. This chain is Small ribosomal subunit protein uS7, found in Renibacterium salmoninarum (strain ATCC 33209 / DSM 20767 / JCM 11484 / NBRC 15589 / NCIMB 2235).